We begin with the raw amino-acid sequence, 185 residues long: MAEGHGDAKGATAHTAADGGHKAPFPPFQKETFASQLVSLTIAFVALYLIVSKLALPRVGGVIEERQKTIDGDLAAAQKLKGESDDALKAYEAELAAARTRAQAIGAETREKLNAAAEAERKTLEERLSAKLADAEKTIAATRTAAMGNVRGIASEAAAAIVQQLAGVQPDSKALDSAVNASIKG.

Residues 1–23 (MAEGHGDAKGATAHTAADGGHKA) are disordered. Over residues 9 to 18 (KGATAHTAAD) the composition is skewed to low complexity. The helical transmembrane segment at 32–51 (TFASQLVSLTIAFVALYLIV) threads the bilayer.

The protein belongs to the ATPase B chain family. F-type ATPases have 2 components, F(1) - the catalytic core - and F(0) - the membrane proton channel. F(1) has five subunits: alpha(3), beta(3), gamma(1), delta(1), epsilon(1). F(0) has three main subunits: a(1), b(2) and c(10-14). The alpha and beta chains form an alternating ring which encloses part of the gamma chain. F(1) is attached to F(0) by a central stalk formed by the gamma and epsilon chains, while a peripheral stalk is formed by the delta and b chains.

Its subcellular location is the cell inner membrane. F(1)F(0) ATP synthase produces ATP from ADP in the presence of a proton or sodium gradient. F-type ATPases consist of two structural domains, F(1) containing the extramembraneous catalytic core and F(0) containing the membrane proton channel, linked together by a central stalk and a peripheral stalk. During catalysis, ATP synthesis in the catalytic domain of F(1) is coupled via a rotary mechanism of the central stalk subunits to proton translocation. Functionally, component of the F(0) channel, it forms part of the peripheral stalk, linking F(1) to F(0). The b'-subunit is a diverged and duplicated form of b found in plants and photosynthetic bacteria. The sequence is that of ATP synthase subunit b 2 (atpF2) from Rhodopseudomonas palustris (strain HaA2).